We begin with the raw amino-acid sequence, 126 residues long: Small ribosomal subunit protein uS13 (126 aa).

The interval 98 to 126 is disordered; sequence PVRGQSTKNNARTRKGRKKTVANKKKATK. Over residues 108-126 the composition is skewed to basic residues; that stretch reads ARTRKGRKKTVANKKKATK.

It belongs to the universal ribosomal protein uS13 family. As to quaternary structure, part of the 30S ribosomal subunit. Forms a loose heterodimer with protein S19. Forms two bridges to the 50S subunit in the 70S ribosome.

Functionally, located at the top of the head of the 30S subunit, it contacts several helices of the 16S rRNA. In the 70S ribosome it contacts the 23S rRNA (bridge B1a) and protein L5 of the 50S subunit (bridge B1b), connecting the 2 subunits; these bridges are implicated in subunit movement. Contacts the tRNAs in the A and P-sites. The protein is Small ribosomal subunit protein uS13 of Phocaeicola vulgatus (strain ATCC 8482 / DSM 1447 / JCM 5826 / CCUG 4940 / NBRC 14291 / NCTC 11154) (Bacteroides vulgatus).